The chain runs to 505 residues: Deoxyguanosinetriphosphate triphosphohydrolase (505 aa).

The 208-residue stretch at 66 to 273 folds into the HD domain; the sequence is RLTHSLEVQQ…MEAADDISYC (208 aa).

This sequence belongs to the dGTPase family. Type 1 subfamily. Homotetramer. Mg(2+) is required as a cofactor.

It catalyses the reaction dGTP + H2O = 2'-deoxyguanosine + triphosphate + H(+). In terms of biological role, dGTPase preferentially hydrolyzes dGTP over the other canonical NTPs. The polypeptide is Deoxyguanosinetriphosphate triphosphohydrolase (Yersinia enterocolitica serotype O:8 / biotype 1B (strain NCTC 13174 / 8081)).